The sequence spans 617 residues: Manganese lipoxygenase (617 aa).

Residues 1 to 17 form the signal peptide; sequence MRIGLLAFAVAARYVEA. Low complexity predominate over residues 23 to 48; that stretch reads GEEVASSSAPTTLPSTSSSSALPSPT. Residues 23-59 form a disordered region; sequence GEEVASSSAPTTLPSTSSSSALPSPTKYTLPHEDPNP. N-linked (GlcNAc...) asparagine glycans are attached at residues asparagine 109, asparagine 119, and asparagine 160. The 496-residue stretch at 122 to 617 folds into the Lipoxygenase domain; it reads LRDIQSHGGL…PAVNPFFLSI (496 aa). Residues histidine 293, histidine 297, histidine 479, and asparagine 483 each coordinate Mn(2+). Residue asparagine 547 is glycosylated (N-linked (GlcNAc...) asparagine). Isoleucine 617 contacts Mn(2+).

The protein belongs to the lipoxygenase family. Manganese lipoxygenase subfamily. It depends on Mn(2+) as a cofactor.

Its subcellular location is the secreted. It catalyses the reaction (9Z,12Z)-octadecadienoate + O2 = (9S)-hydroperoxy-(10E,12Z)-octadecadienoate. The catalysed reaction is (9Z,12Z)-octadecadienoate + O2 = (11S)-hydroperoxy-(9Z,12Z)-octadecadienoate. It carries out the reaction (9Z,12Z)-octadecadienoate + O2 = (13R)-hydroperoxy-(9Z,11E)-octadecadienoate. The enzyme catalyses (9Z,12Z,15Z)-octadecatrienoate + O2 = (9S)-hydroperoxy-(10E,12Z,15Z)-octadecatrienoate. It catalyses the reaction (9Z,12Z,15Z)-octadecatrienoate + O2 = (11R)-hydroperoxy-(9Z,12Z,15Z)-octadecatrienoate. The catalysed reaction is (9Z,12Z,15Z)-octadecatrienoate + O2 = (13R)-hydroperoxy-(9Z,11E,15Z)-octadecatrienoate. Its function is as follows. Lipoxygenase that metabolizes linoleic and alpha-linolenic acids to 9S-, 11- and 13R-hydroperoxy fatty acids. At the end of lipoxygenation, the intermediate products 11S-HPODE and 13R-HPODE from linoleic acid are then transformed into 9S-HPODE as the final product. The intermediate product 11R-HPOTrE from alpha-linolenic acid is transformed into 9S-HPOTrE and 13R-HPOTrE as the final products. 9S-HPOTrE is further oxidized by the enzyme to 9,16-DiHOTrE as the end product. Also acts on gamma-linolenic acid producing 9-HOTrE(n-6) as the main metabolite. The polypeptide is Manganese lipoxygenase (Nakataea oryzae (Rice stem rot fungus)).